The sequence spans 397 residues: Phosphoglycerate kinase (397 aa).

Substrate-binding positions include 25-27, Arg41, 64-67, Arg118, and Arg151; these read DLN and HLGR. ATP is bound by residues Lys202, Glu324, and 350–353; that span reads GGDT.

Belongs to the phosphoglycerate kinase family. Monomer.

It is found in the cytoplasm. It catalyses the reaction (2R)-3-phosphoglycerate + ATP = (2R)-3-phospho-glyceroyl phosphate + ADP. It functions in the pathway carbohydrate degradation; glycolysis; pyruvate from D-glyceraldehyde 3-phosphate: step 2/5. This Acidovorax ebreus (strain TPSY) (Diaphorobacter sp. (strain TPSY)) protein is Phosphoglycerate kinase.